Here is an 824-residue protein sequence, read N- to C-terminus: Frameshifted structural polyprotein (824 aa).

The span at 1-10 (MEFIPTQTFY) shows a compositional bias: polar residues. A disordered region spans residues 1-104 (MEFIPTQTFY…KKKKPGRRER (104 aa)). Residues 22-44 (RPTIQVIRPRPRPQRQAGQLAQL) show a composition bias toward low complexity. The host transcription inhibition stretch occupies residues 36 to 68 (RQAGQLAQLISAVNKLTMRAVPQQKPRKNRKNK). A compositionally biased stretch (basic residues) spans 60-72 (KPRKNRKNKKQKQ). Positions 61 to 99 (PRKNRKNKKQKQKQQAPQNNTNQKKQPPKKKPAQKKKKP) match the Nuclear localization signal motif. Residues 73-85 (KQQAPQNNTNQKK) are compositionally biased toward low complexity. Positions 84 to 114 (KKQPPKKKPAQKKKKPGRRERMCMKIENDCI) are binding to the viral RNA. The span at 86–101 (QPPKKKPAQKKKKPGR) shows a compositional bias: basic residues. Ribosome-binding stretches follow at residues 91–100 (KPAQKKKKPG) and 99–113 (PGRR…ENDC). Cysteine 113 and cysteine 128 form a disulfide bridge. The region spanning 113–261 (CIFEVKHEGK…KITPEGAEEW (149 aa)) is the Peptidase S3 domain. Histidine 139 serves as the catalytic Charge relay system. The Nuclear export signal signature appears at 144–154 (IDNADLAKLAF). The active-site Charge relay system is the aspartate 161. The segment at 183-193 (PEGYYNWHHGA) is dimerization of the capsid protein. Residue serine 213 is the Charge relay system of the active site. The interval 219–223 (DNKGR) is dimerization of the capsid protein. The interval 262–274 (SLAIPVMCLLANT) is functions as an uncleaved signal peptide for the precursor of protein E3/E2. Topologically, residues 262–692 (SLAIPVMCLL…YYYELYPTMT (431 aa)) are extracellular. Residues asparagine 273, asparagine 588, and asparagine 670 are each glycosylated (N-linked (GlcNAc...) asparagine; by host). A helical transmembrane segment spans residues 693–713 (VVVVSVASFILLSMVGMAVGM). At 714 to 748 (CMCARRRCITPYELTPGATVPFLLSLICCIRTAKA) the chain is on the cytoplasmic side. 3 S-palmitoyl cysteine; by host lipidation sites follow: cysteine 721, cysteine 741, and cysteine 742. Residues 721–741 (CITPYELTPGATVPFLLSLIC) form a transient transmembrane before p62-6K protein processing region. Residues 749-763 (ATYQEAAVYLWNEQQ) are Extracellular-facing. Residues 764 to 784 (PLFWLQALIPLAALIVLCNCL) form a helical membrane-spanning segment. At 785 to 795 (RLLPCCCKTLA) the chain is on the cytoplasmic side.

This sequence belongs to the alphavirus frameshifted structural polyprotein family. In terms of assembly, homodimer. Homomultimer. Interacts with host karyopherin KPNA4; this interaction allows the nuclear import of the viral capsid protein. Interacts with spike glycoprotein E2. Interacts with host IRAK1; the interaction leads to inhibition of IRAK1-dependent signaling. As to quaternary structure, the precursor of protein E3/E2 and E1 form a heterodimer shortly after synthesis. Processing of the precursor of protein E3/E2 into E2 and E3 results in a heterodimer of the spike glycoproteins E2 and E1. Spike at virion surface are constituted of three E2-E1 heterodimers. Interacts with 6K protein. Interacts with host MXRA8; this interaction mediates virus entry. In terms of processing, specific enzymatic cleavages in vivo yield mature proteins. Capsid protein is auto-cleaved during polyprotein translation, unmasking a signal peptide at the N-terminus of the precursor of E3/E2. The remaining polyprotein is then targeted to the host endoplasmic reticulum, where host signal peptidase cleaves it into pE2 and TF. pE2 is further processed to mature E3 and E2 by host furin in trans-Golgi vesicle. Post-translationally, palmitoylated via thioester bonds. These palmitoylations may induce disruption of the C-terminus transmembrane. This would result in the reorientation of E2 C-terminus from lumenal to cytoplasmic side. Palmitoylated via thioester bonds.

Its subcellular location is the virion. The protein resides in the host cytoplasm. It is found in the host cell membrane. The protein localises to the host nucleus. It localises to the virion membrane. The enzyme catalyses Autocatalytic release of the core protein from the N-terminus of the togavirus structural polyprotein by hydrolysis of a -Trp-|-Ser- bond.. In terms of biological role, forms an icosahedral capsid with a T=4 symmetry composed of 240 copies of the capsid protein surrounded by a lipid membrane through which penetrate 80 spikes composed of trimers of E1-E2 heterodimers. The capsid protein binds to the viral RNA genome at a site adjacent to a ribosome binding site for viral genome translation following genome release. Possesses a protease activity that results in its autocatalytic cleavage from the nascent structural protein. Following its self-cleavage, the capsid protein transiently associates with ribosomes, and within several minutes the protein binds to viral RNA and rapidly assembles into icosahedric core particles. The resulting nucleocapsid eventually associates with the cytoplasmic domain of the spike glycoprotein E2 at the cell membrane, leading to budding and formation of mature virions. In case of infection, new virions attach to target cells and after clathrin-mediated endocytosis their membrane fuses with the host endosomal membrane. This leads to the release of the nucleocapsid into the cytoplasm, followed by an uncoating event necessary for the genomic RNA to become accessible. The uncoating might be triggered by the interaction of capsid proteins with ribosomes. Binding of ribosomes would release the genomic RNA since the same region is genomic RNA-binding and ribosome-binding. Specifically inhibits interleukin-1 receptor-associated kinase 1/IRAK1-dependent signaling during viral entry, representing a means by which the alphaviruses may evade innate immune detection and activation prior to viral gene expression. Functionally, provides the signal sequence for the translocation of the precursor of protein E3/E2 to the host endoplasmic reticulum. Furin-cleaved E3 remains associated with spike glycoprotein E1 and mediates pH protection of the latter during the transport via the secretory pathway. After virion release from the host cell, the assembly protein E3 is gradually released in the extracellular space. Its function is as follows. Plays a role in viral attachment to target host cell, by binding to the cell receptor. Synthesized as a p62 precursor which is processed by furin at the cell membrane just before virion budding, giving rise to E2-E1 heterodimer. The p62-E1 heterodimer is stable, whereas E2-E1 is unstable and dissociate at low pH. p62 is processed at the last step, presumably to avoid E1 fusion activation before its final export to cell surface. E2 C-terminus contains a transitory transmembrane that would be disrupted by palmitoylation, resulting in reorientation of the C-terminal tail from lumenal to cytoplasmic side. This step is critical since E2 C-terminus is involved in budding by interacting with capsid proteins. This release of E2 C-terminus in cytoplasm occurs lately in protein export, and precludes premature assembly of particles at the endoplasmic reticulum membrane. Plays a role in viral assembly and release. This chain is Frameshifted structural polyprotein, found in Aedes aegypti (Yellowfever mosquito).